The chain runs to 580 residues: Laccase-5 (580 aa).

The first 25 residues, 1 to 25 (MDVTKSLLCFISFVAFLLFSSVAEA), serve as a signal peptide directing secretion. 2 Plastocyanin-like domains span residues 34-150 (IIQA…PPAG) and 160-312 (RNVP…YKSA). The N-linked (GlcNAc...) asparagine glycan is linked to Asn80. Positions 84, 86, 129, and 131 each coordinate Cu cation. N-linked (GlcNAc...) asparagine glycosylation is found at Asn189, Asn300, Asn340, Asn392, Asn402, Asn410, and Asn443. Residues 428 to 564 (DFPAKPPVKF…AMAFLVENGN (137 aa)) form the Plastocyanin-like 3 domain. Positions 481, 484, 486, 543, 544, 545, and 549 each coordinate Cu cation.

The protein belongs to the multicopper oxidase family. The cofactor is Cu cation. Ubiquitous and constitutive.

The protein resides in the secreted. Its subcellular location is the extracellular space. It is found in the apoplast. The catalysed reaction is 4 hydroquinone + O2 = 4 benzosemiquinone + 2 H2O. Lignin degradation and detoxification of lignin-derived products. This Arabidopsis thaliana (Mouse-ear cress) protein is Laccase-5 (LAC5).